Consider the following 482-residue polypeptide: Butyrophilin-like protein 2 (482 aa).

At 1–6 (MVDFPG) the chain is on the cytoplasmic side. Residues 7 to 23 (YNLSGAVASFLFILLTM) form a helical; Signal-anchor for type II membrane protein membrane-spanning segment. At 24–482 (KQSEDFRVIG…VAVGLPRKRS (459 aa)) the chain is on the extracellular side. Ig-like V-type domains are found at residues 29 to 140 (FRVI…LLLK), 142 to 234 (AGLG…SVIS), and 236 to 355 (PEKL…ASLD). 3 disulfides stabilise this stretch: cysteine 50-cysteine 124, cysteine 164-cysteine 218, and cysteine 267-cysteine 341. Asparagine 210 carries N-linked (GlcNAc...) asparagine glycosylation. A glycan (N-linked (GlcNAc...) asparagine) is linked at asparagine 427.

It belongs to the immunoglobulin superfamily. BTN/MOG family. In terms of tissue distribution, expressed in brain, heart, kidney, liver, pancreas, ovary, leukocyte, small intestine, testis and thymus.

Its subcellular location is the membrane. Its function is as follows. Negative regulator of T-cell proliferation. This chain is Butyrophilin-like protein 2, found in Homo sapiens (Human).